The sequence spans 318 residues: UDP-3-O-acylglucosamine N-acyltransferase (318 aa).

Histidine 231 functions as the Proton acceptor in the catalytic mechanism.

Belongs to the transferase hexapeptide repeat family. LpxD subfamily. In terms of assembly, homotrimer.

The catalysed reaction is a UDP-3-O-[(3R)-3-hydroxyacyl]-alpha-D-glucosamine + a (3R)-hydroxyacyl-[ACP] = a UDP-2-N,3-O-bis[(3R)-3-hydroxyacyl]-alpha-D-glucosamine + holo-[ACP] + H(+). The protein operates within bacterial outer membrane biogenesis; LPS lipid A biosynthesis. Catalyzes the N-acylation of UDP-3-O-acylglucosamine using 3-hydroxyacyl-ACP as the acyl donor. Is involved in the biosynthesis of lipid A, a phosphorylated glycolipid that anchors the lipopolysaccharide to the outer membrane of the cell. In Campylobacter jejuni subsp. doylei (strain ATCC BAA-1458 / RM4099 / 269.97), this protein is UDP-3-O-acylglucosamine N-acyltransferase.